A 713-amino-acid polypeptide reads, in one-letter code: KNR4/SMI1 homolog (713 aa).

4 disordered regions span residues 18–129 (PDRY…VTRD), 255–274 (IFINPNAGSPNSSTPGSPVA), 400–457 (RHQM…SKPA), and 500–713 (EPLE…KGKK). Positions 22–34 (ASQQRSSKASQSA) are enriched in low complexity. The span at 35–65 (GANSQNRPLYNNDDNQSEMYQASSSYTGGYT) shows a compositional bias: polar residues. Low complexity-rich tracts occupy residues 66–81 (NSPSASSSNLAGGAAA) and 88–103 (SSRNNSTTNFSASSTS). The span at 260 to 270 (NAGSPNSSTPG) shows a compositional bias: polar residues. Residues 400-412 (RHQMQRREHERRQ) are compositionally biased toward basic and acidic residues. The span at 413–429 (AAAAAQQQQQQQQHHAQ) shows a compositional bias: low complexity. Basic and acidic residues-rich tracts occupy residues 507–605 (EIKG…EEQK) and 613–662 (AKAE…KIDE). Over residues 663–686 (ENGNAEEADEEADDDDEDDEEEGD) the composition is skewed to acidic residues. Positions 701-713 (SKSKKKNKKKGKK) are enriched in basic residues.

It belongs to the KNR4/SMI1 family.

This is KNR4/SMI1 homolog from Yarrowia lipolytica (strain CLIB 122 / E 150) (Yeast).